A 389-amino-acid chain; its full sequence is Acetate kinase (389 aa).

Asn9 lines the Mg(2+) pocket. An ATP-binding site is contributed by Lys16. Arg77 contacts substrate. Asp134 serves as the catalytic Proton donor/acceptor. ATP-binding positions include 194–198 (HLGNG), 268–270 (DFR), and 316–320 (GVGEN). Glu370 lines the Mg(2+) pocket.

This sequence belongs to the acetokinase family. Homodimer. Mg(2+) serves as cofactor. It depends on Mn(2+) as a cofactor.

The protein localises to the cytoplasm. It carries out the reaction acetate + ATP = acetyl phosphate + ADP. The protein operates within metabolic intermediate biosynthesis; acetyl-CoA biosynthesis; acetyl-CoA from acetate: step 1/2. Catalyzes the formation of acetyl phosphate from acetate and ATP. Can also catalyze the reverse reaction. This is Acetate kinase from Mycolicibacterium vanbaalenii (strain DSM 7251 / JCM 13017 / BCRC 16820 / KCTC 9966 / NRRL B-24157 / PYR-1) (Mycobacterium vanbaalenii).